Consider the following 227-residue polypeptide: Cytochrome c oxidase subunit 2 (227 aa).

At 1–14 (MAYPFELGFQDATS) the chain is on the mitochondrial intermembrane side. The chain crosses the membrane as a helical span at residues 15–45 (PIMEELLHFHDHTLMIVFLISSLVLYIISLM). At 46 to 59 (LTTKLTHTSTMDAQ) the chain is on the mitochondrial matrix side. A helical membrane pass occupies residues 60–87 (EVETIWTILPAIILILIALPSLRVLYMM). The Mitochondrial intermembrane portion of the chain corresponds to 88-227 (DEINDPSLTV…HFENWSSSML (140 aa)). Cu cation contacts are provided by His161, Cys196, Glu198, Cys200, His204, and Met207. Position 198 (Glu198) interacts with Mg(2+).

This sequence belongs to the cytochrome c oxidase subunit 2 family. As to quaternary structure, component of the cytochrome c oxidase (complex IV, CIV), a multisubunit enzyme composed of 14 subunits. The complex is composed of a catalytic core of 3 subunits MT-CO1, MT-CO2 and MT-CO3, encoded in the mitochondrial DNA, and 11 supernumerary subunits COX4I, COX5A, COX5B, COX6A, COX6B, COX6C, COX7A, COX7B, COX7C, COX8 and NDUFA4, which are encoded in the nuclear genome. The complex exists as a monomer or a dimer and forms supercomplexes (SCs) in the inner mitochondrial membrane with NADH-ubiquinone oxidoreductase (complex I, CI) and ubiquinol-cytochrome c oxidoreductase (cytochrome b-c1 complex, complex III, CIII), resulting in different assemblies (supercomplex SCI(1)III(2)IV(1) and megacomplex MCI(2)III(2)IV(2)). Found in a complex with TMEM177, COA6, COX18, COX20, SCO1 and SCO2. Interacts with TMEM177 in a COX20-dependent manner. Interacts with COX20. Interacts with COX16. Cu cation is required as a cofactor.

It is found in the mitochondrion inner membrane. The catalysed reaction is 4 Fe(II)-[cytochrome c] + O2 + 8 H(+)(in) = 4 Fe(III)-[cytochrome c] + 2 H2O + 4 H(+)(out). Component of the cytochrome c oxidase, the last enzyme in the mitochondrial electron transport chain which drives oxidative phosphorylation. The respiratory chain contains 3 multisubunit complexes succinate dehydrogenase (complex II, CII), ubiquinol-cytochrome c oxidoreductase (cytochrome b-c1 complex, complex III, CIII) and cytochrome c oxidase (complex IV, CIV), that cooperate to transfer electrons derived from NADH and succinate to molecular oxygen, creating an electrochemical gradient over the inner membrane that drives transmembrane transport and the ATP synthase. Cytochrome c oxidase is the component of the respiratory chain that catalyzes the reduction of oxygen to water. Electrons originating from reduced cytochrome c in the intermembrane space (IMS) are transferred via the dinuclear copper A center (CU(A)) of subunit 2 and heme A of subunit 1 to the active site in subunit 1, a binuclear center (BNC) formed by heme A3 and copper B (CU(B)). The BNC reduces molecular oxygen to 2 water molecules using 4 electrons from cytochrome c in the IMS and 4 protons from the mitochondrial matrix. The polypeptide is Cytochrome c oxidase subunit 2 (MT-CO2) (Sciurus carolinensis (Eastern gray squirrel)).